We begin with the raw amino-acid sequence, 446 residues long: 3-phosphoshikimate 1-carboxyvinyltransferase (446 aa).

3-phosphoshikimate-binding residues include lysine 21, serine 22, and arginine 26. Lysine 21 provides a ligand contact to phosphoenolpyruvate. Residues glycine 94 and arginine 122 each contribute to the phosphoenolpyruvate site. Serine 167, glutamine 169, aspartate 315, and lysine 342 together coordinate 3-phosphoshikimate. Position 169 (glutamine 169) interacts with phosphoenolpyruvate. The active-site Proton acceptor is aspartate 315. Phosphoenolpyruvate is bound by residues arginine 346 and arginine 388.

It belongs to the EPSP synthase family. In terms of assembly, monomer.

The protein localises to the cytoplasm. It carries out the reaction 3-phosphoshikimate + phosphoenolpyruvate = 5-O-(1-carboxyvinyl)-3-phosphoshikimate + phosphate. It functions in the pathway metabolic intermediate biosynthesis; chorismate biosynthesis; chorismate from D-erythrose 4-phosphate and phosphoenolpyruvate: step 6/7. Catalyzes the transfer of the enolpyruvyl moiety of phosphoenolpyruvate (PEP) to the 5-hydroxyl of shikimate-3-phosphate (S3P) to produce enolpyruvyl shikimate-3-phosphate and inorganic phosphate. In Alkalilimnicola ehrlichii (strain ATCC BAA-1101 / DSM 17681 / MLHE-1), this protein is 3-phosphoshikimate 1-carboxyvinyltransferase.